We begin with the raw amino-acid sequence, 306 residues long: Protein YIPF1 (306 aa).

Over 1-119 (MAAVDDLQFE…VRLYIRSNPD (119 aa)) the chain is Cytoplasmic. Positions 14–62 (NAATSLTANPDATTVNIEDPGETPKHQPGSPRGSGREEDDELLGNDDSD) are disordered. The span at 15–29 (AATSLTANPDATTVN) shows a compositional bias: polar residues. The span at 50–59 (EEDDELLGND) shows a compositional bias: acidic residues. The chain crosses the membrane as a helical span at residues 120–140 (LYGPFWICATLVFAIAISGNL). The Lumenal segment spans residues 141 to 162 (SNFLIHLGEKTYHYVPEFRKVS). The chain crosses the membrane as a helical span at residues 163 to 183 (IAATIIYAYAWLVPLALWGFL). Residues 184–200 (MWRNSKVMNIVSYSFLE) are Cytoplasmic-facing. Residues 201-221 (IVCVYGYSLFIYIPTAILWII) form a helical membrane-spanning segment. Residues 222 to 227 (PQKAVR) are Lumenal-facing. Residues 228–248 (WILVMIALGISGSLLAMTFWP) traverse the membrane as a helical segment. The Cytoplasmic portion of the chain corresponds to 249–256 (AVREDNRR). Residues 257-277 (VALATIVTIVLLHMLLSVGCL) form a helical membrane-spanning segment. Topologically, residues 278–306 (AYFFDAPEMDHLPTTTATPNQTVAAAKSS) are lumenal. An N-linked (GlcNAc...) asparagine glycan is attached at N297.

Belongs to the YIP1 family. Interacts with YIPF6; this interaction may stabilize YIPF1. May also form a ternary complex with YIPF2 and YIPF6.

It is found in the golgi apparatus. It localises to the cis-Golgi network membrane. The protein resides in the trans-Golgi network membrane. Its subcellular location is the late endosome membrane. The sequence is that of Protein YIPF1 (YIPF1) from Homo sapiens (Human).